Here is a 387-residue protein sequence, read N- to C-terminus: MATKKKTNFDDITKKYGAERDKALADALALIEKDFGKGSLMRLGEAANQKVSVVSSGSLALDIALGAGGYPKGRIVEIYGPESSGKTTVALHAVAAVQKEGGIAAFIDAENALDPEYAKALGVNIDELLLSQPDYGEQGLQIAEKLITSGAVDLVVIDSVAALVPKAEIDGEIGDSSVGLQARMMSQAMRKLAGHINKTKTTAIFINQLREKVGVMFGSPETTPGGRALKFYASVRLDVRGSTKIEEGSGDNKTQIGKITKIKVVKNKVAPPFKVALVDIMFGEGISSTGELLNIAVEEGIIKKSGAWFAYNDEKIGQGAEKAKNYLKEHQDVFDEIDHKVRAAHGLLDDSEVAETEEETTASKTKAKAKKEEKAVETEEIELELED.

80-87 (GPESSGKT) lines the ATP pocket. Positions 348 to 387 (LDDSEVAETEEETTASKTKAKAKKEEKAVETEEIELELED) are disordered. Composition is skewed to acidic residues over residues 349–360 (DDSEVAETEEET) and 378–387 (TEEIELELED).

This sequence belongs to the RecA family.

Its subcellular location is the cytoplasm. In terms of biological role, can catalyze the hydrolysis of ATP in the presence of single-stranded DNA, the ATP-dependent uptake of single-stranded DNA by duplex DNA, and the ATP-dependent hybridization of homologous single-stranded DNAs. It interacts with LexA causing its activation and leading to its autocatalytic cleavage. The sequence is that of Protein RecA from Lactococcus lactis subsp. cremoris (strain MG1363).